The primary structure comprises 288 residues: Light-independent protochlorophyllide reductase iron-sulfur ATP-binding protein (288 aa).

ATP is bound by residues 10–15 (GIGKST) and Lys-39. Ser-14 provides a ligand contact to Mg(2+). Residues Cys-95 and Cys-129 each coordinate [4Fe-4S] cluster. 180–181 (NR) serves as a coordination point for ATP.

It belongs to the NifH/BchL/ChlL family. Homodimer. Protochlorophyllide reductase is composed of three subunits; ChlL, ChlN and ChlB. It depends on [4Fe-4S] cluster as a cofactor.

The catalysed reaction is chlorophyllide a + oxidized 2[4Fe-4S]-[ferredoxin] + 2 ADP + 2 phosphate = protochlorophyllide a + reduced 2[4Fe-4S]-[ferredoxin] + 2 ATP + 2 H2O. It functions in the pathway porphyrin-containing compound metabolism; chlorophyll biosynthesis (light-independent). Component of the dark-operative protochlorophyllide reductase (DPOR) that uses Mg-ATP and reduced ferredoxin to reduce ring D of protochlorophyllide (Pchlide) to form chlorophyllide a (Chlide). This reaction is light-independent. The L component serves as a unique electron donor to the NB-component of the complex, and binds Mg-ATP. This is Light-independent protochlorophyllide reductase iron-sulfur ATP-binding protein from Trichodesmium erythraeum (strain IMS101).